Consider the following 1401-residue polypeptide: MKDLLNFLKAQHKTEEFDAIKIGLASPDMIRSWSFGEVKKPETINYRTFKPERDGLFCARIFGPVKDYECLCGKYKRLKHRGVICEKCGVEVTQTKVRRDRMGHIELASPVAHIWFLKSLPSRIGLLMDMPLRDIERVLYFEMYVVTEPGMTDLERGQMLTEEEYLDRLEEWGDEFTAKMGAEAIKDLLASMDLPAEAEQMREELDTTNSETKRKKLTKRLKLVEAFVASGNKPEWMILTVLPVLPPDLRPLVPLDGGRFATSDLNDLYRRVINRNNRLKRLLELAAPDIIVRNEKRMLQESVDALLDNGRRGRAITGSNKRPLKSLADMIKGKQGRFRQNLLGKRVDYSGRSVITVGPYLRLHQCGLPKKMALELFKPFIYSKLETRGLATTIKAAKKMVEREEAVVWDILDEVIREHPVLLNRAPTLHRLGIQAFEPVLIEGKAIQLHPLVCAAYNADFDGDQMAVHVPLTLEAQLEARTLMMSTNNILSPASGDPIIVPSQDVVLGLYYMTREKINAKGEGMYLTGPAEAEKAYRTKTAELHARVKVRITETIKHENGKLTTETKMIDTTVGRAMLWQIVPKGLPYSLVNQKLGKKQISNLLNEAYRKLGLKDTVIFADQIMYTGFAYAALSGVSVGIDDMVVPAAKYTEIAEAEEEVREIQEQFQSGLVTAGERYNKVIDIWASTNDRVAKAMMENLSSEQVINRQGEQEKQESFNSIYMMADSGARGSAAQIRQLAGMRGLMARPDGSIIETPITANFKEGLNVLQYFISTHGARKGLADTALKTANSGYLTRRLVDVAQDVVVTEHDCGTLEGVVMTPHIEGGDVKVALTELALGRVVSEDILKPGTDEVLIPRNTLLDEKWCKVINDNSVDQIKVRSVVTCDSDFGCCAQCYGRDLARGHLVNQGEAVGVIAAQSIGEPGTQLTMRTFHIGGAASTAAAENSIQAKNNGSVKLHNAKFVTNKDGKLVITSRASELTIIDEFGRTKEKHKLPYGSMLSKADGDAVAAGETVANWEAHTMPIITEVAGRVQFVDMIDGVTVSRQTDDLTGLSSSEVTEAAARPAAGKDMRPAIKLVDANGKDVLIPGTDMPAQYFLPGKAIVNLDDGAEVNVGDTLARIPQKSGGNKDITGGLPRVADLFEARKPKEPAILAEHSGTVSFGKETKGKRRLIITRDSGDTYEEMIPKHRQLNVFEGERIERGDVIADGPESPHDILRLRGIHAVTTYIANEVQEVYRLQGVKINDKHIETIVRQMLRKCTITFAGDSEFLPGETVEYSQVKIANRKLVEEGKEPARFERELLGITKASLATESFISAASFQETTRVLTEAAVSGKRDDLRGLKENVIVGRLIPAGTGFAYHQDRQAKRAQEQQGPSAEQATDNLAALLNAGFSSDDE.

Residues cysteine 70, cysteine 72, cysteine 85, and cysteine 88 each coordinate Zn(2+). Mg(2+) contacts are provided by aspartate 460, aspartate 462, and aspartate 464. Residues cysteine 814, cysteine 888, cysteine 895, and cysteine 898 each contribute to the Zn(2+) site. The tract at residues 1368-1387 is disordered; the sequence is RQAKRAQEQQGPSAEQATDN. Over residues 1375 to 1386 the composition is skewed to polar residues; that stretch reads EQQGPSAEQATD.

It belongs to the RNA polymerase beta' chain family. The RNAP catalytic core consists of 2 alpha, 1 beta, 1 beta' and 1 omega subunit. When a sigma factor is associated with the core the holoenzyme is formed, which can initiate transcription. Mg(2+) serves as cofactor. Requires Zn(2+) as cofactor.

It catalyses the reaction RNA(n) + a ribonucleoside 5'-triphosphate = RNA(n+1) + diphosphate. In terms of biological role, DNA-dependent RNA polymerase catalyzes the transcription of DNA into RNA using the four ribonucleoside triphosphates as substrates. The polypeptide is DNA-directed RNA polymerase subunit beta' (Vibrio cholerae serotype O1 (strain ATCC 39541 / Classical Ogawa 395 / O395)).